The following is a 276-amino-acid chain: Large ribosomal subunit protein uL2c (276 aa).

The tract at residues 223 to 254 is disordered; it reads VVKNPIDHPHGGGEGRSPIGRAKPVTPWGQPA.

It belongs to the universal ribosomal protein uL2 family. Part of the 50S ribosomal subunit.

It is found in the plastid. The protein resides in the chloroplast. This is Large ribosomal subunit protein uL2c (rpl2) from Emiliania huxleyi (Coccolithophore).